The following is a 120-amino-acid chain: Large ribosomal subunit protein uL18c (120 aa).

The protein belongs to the universal ribosomal protein uL18 family. In terms of assembly, part of the 50S ribosomal subunit; contacts the 5S rRNA.

The protein localises to the plastid. Its subcellular location is the chloroplast. Binds 5S rRNA, forms part of the central protuberance of the 50S subunit. In Porphyra purpurea (Red seaweed), this protein is Large ribosomal subunit protein uL18c (rpl18).